The chain runs to 535 residues: CTP synthase (535 aa).

Residues 1–267 (MTKYIFVTGG…DQIVCDHLKL (267 aa)) form an amidoligase domain region. S13 is a binding site for CTP. Residue S13 participates in UTP binding. 14–19 (SLGKGI) contributes to the ATP binding site. Position 54 (Y54) interacts with L-glutamine. D71 is an ATP binding site. Positions 71 and 141 each coordinate Mg(2+). Residues 148–150 (DIE), 188–193 (KTKPTQ), and K224 each bind CTP. UTP is bound by residues 188–193 (KTKPTQ) and K224. Position 240–242 (240–242 (RDA)) interacts with ATP. Residues 292–534 (KIALVGKYVE…VRASITNKES (243 aa)) form the Glutamine amidotransferase type-1 domain. G354 contacts L-glutamine. The active-site Nucleophile; for glutamine hydrolysis is the C381. L-glutamine contacts are provided by residues 382–385 (LGMQ), E405, and R462. Active-site residues include H507 and E509.

The protein belongs to the CTP synthase family. Homotetramer.

It catalyses the reaction UTP + L-glutamine + ATP + H2O = CTP + L-glutamate + ADP + phosphate + 2 H(+). The enzyme catalyses L-glutamine + H2O = L-glutamate + NH4(+). The catalysed reaction is UTP + NH4(+) + ATP = CTP + ADP + phosphate + 2 H(+). It functions in the pathway pyrimidine metabolism; CTP biosynthesis via de novo pathway; CTP from UDP: step 2/2. Its activity is regulated as follows. Allosterically activated by GTP, when glutamine is the substrate; GTP has no effect on the reaction when ammonia is the substrate. The allosteric effector GTP functions by stabilizing the protein conformation that binds the tetrahedral intermediate(s) formed during glutamine hydrolysis. Inhibited by the product CTP, via allosteric rather than competitive inhibition. Functionally, catalyzes the ATP-dependent amination of UTP to CTP with either L-glutamine or ammonia as the source of nitrogen. Regulates intracellular CTP levels through interactions with the four ribonucleotide triphosphates. The polypeptide is CTP synthase (Bacillus cereus (strain ATCC 10987 / NRS 248)).